The primary structure comprises 545 residues: MAKQLIFDQQARTALKHGIDTLALAVKTTLGPRGRNVALDKKWGAPTVTHDGVSVAKEIELKDPFANLGVQLLKQAAVKTNDVAGDGTTTATVLAQAIINEGLKLVAAGANPMLLKRGLDKGGQALVARIKEQAITLKTRDEIRNVATISAQDAEVGELLATVMDKIGRDGVVTVEEGKSTHLEHELVEGMQFDRGYISPYFITDSARMEAVLDEPYILITDKKISAIKDLLPILEAVLSSGKKDLLVIAEDVDGEALATLVVNKLRGTLNALAVKAPGFGDRRKAMLQDIAILTGGTVISEEIGRKLESATLQDLGRARRVKADKDNTVIVEGHGDKQAIQARIAQLKQQIETTTSDYDREKLQERVAKLSGGVAVIKVGAPTEPAMKERKARVEDALNATRAAVEEGIVPGGGVALLNAIPALDNVTTQFEEERMALNVLRRALEEPLRQLATNAGEDGSVVVENVRNEQRKHNNNHYGYDVMTGTYVDLMQAGIIDPAKVVRSALENAISVAGMVLTTEALIVDAPEPKKKNGTPPMPDDDF.

ATP is bound by residues 29 to 32, 86 to 90, Gly-414, and Asp-499; these read TLGP and DGTTT.

The protein belongs to the chaperonin (HSP60) family. As to quaternary structure, forms a cylinder of 14 subunits composed of two heptameric rings stacked back-to-back. Interacts with the co-chaperonin GroES.

It localises to the cytoplasm. It catalyses the reaction ATP + H2O + a folded polypeptide = ADP + phosphate + an unfolded polypeptide.. In terms of biological role, together with its co-chaperonin GroES, plays an essential role in assisting protein folding. The GroEL-GroES system forms a nano-cage that allows encapsulation of the non-native substrate proteins and provides a physical environment optimized to promote and accelerate protein folding. This Chloroflexus aurantiacus (strain ATCC 29366 / DSM 635 / J-10-fl) protein is Chaperonin GroEL 2.